We begin with the raw amino-acid sequence, 2249 residues long: Endoribonuclease Dcr-1 (2249 aa).

The essential for miRNA substrate recognition stretch occupies residues 1 to 371; it reads MAFHWCDNNL…SPKVRRLLQT (371 aa). Positions 1–690 are important for interaction with loqs isoform PB (loqs-PB); that stretch reads MAFHWCDNNL…SKQPPTACDI (690 aa). The helicase domain stretch occupies residues 1–761; the sequence is MAFHWCDNNL…AEIDTAHSLA (761 aa). The tract at residues 1 to 1042 is necessary for processing certain pre-miRNas, such as pre-let 7 and pre-bantam; sequence MAFHWCDNNL…VSLELAKERV (1042 aa). Position 37–44 (37–44) interacts with ATP; that stretch reads LGHRSSKE. Residues 371 to 491 are dispensable for activity and substrate recognition; sequence TLRCFKPEEV…HHRDHNDGSD (121 aa). Residues 436-486 are disordered; that stretch reads TTEDRQTNRSAARVTPTPTPAHAKPKPSSGANTAQPRTRRRVYTRRHHRDH. The span at 472–484 shows a compositional bias: basic residues; sequence RTRRRVYTRRHHR. Positions 485-648 constitute a Helicase C-terminal domain; that stretch reads DHNDGSDTLC…TGDTTEADSD (164 aa). Residues 496–606 are essential for miRNA substrate recognition; the sequence is LIYCNQNHTA…VQCKGRARAA (111 aa). Residues 617-761 form a dispensable for activity and substrate recognition region; that stretch reads SYKSPTVGSV…AEIDTAHSLA (145 aa). 2 disordered regions span residues 640 to 665 and 705 to 757; these read GDTT…PYTF and LDTS…IDTA. Low complexity predominate over residues 716–726; sequence SMSNTSPSESS. Residues 825–920 form the Dicer dsRNA-binding fold domain; it reads AIALVNKYCA…QPIGKEGFRA (96 aa). A wing domain region spans residues 924 to 957; it reads DWECFELEPEDEQIVQLSDEPRPGTTKRRQYYYK. Positions 963–1108 are platform domain; that stretch reads FCDCRPVAGA…WQFLELIQAN (146 aa). In terms of domain architecture, PAZ spans 1100-1246; the sequence is QFLELIQANG…LVPELCTVHP (147 aa). Positions 1147–2249 are essential for production of mature miRNAs from pre-miRNAs. Also important for proper formation of the siRISC complex but is dispensable for biogenesis of siRNAs; sequence QYFYVAEICP…KKQGLIAKKD (1103 aa). The tract at residues 1314–1351 is disordered; that stretch reads ESKQKESLKDDTINGKDLADVEKKPTSEETQLDKDSKD. Ser-1423 carries the phosphoserine modification. Positions 1426–1477 are disordered; sequence FWDVSNGESGFKGPKSSQNKQGGKGKAKGPAKPTFNYYDSDNSLGSSYDDDD. Residues 1437–1446 are compositionally biased toward low complexity; that stretch reads KGPKSSQNKQ. Over residues 1462 to 1471 the composition is skewed to polar residues; it reads YYDSDNSLGS. RNase III domains follow at residues 1698–1919 and 1993–2150; these read ITSA…IECG and FEEF…LDSN. The Mg(2+) site is built by Glu-1745 and Asp-1749. Phosphoserine is present on residues Ser-1877 and Ser-1880. Mg(2+) is bound by residues Asp-1905, Glu-1908, Glu-2032, Asp-2136, and Glu-2139. The DRBM domain occupies 2175–2241; it reads VPKSPIRELL…AKCALRQLKK (67 aa).

It belongs to the helicase family. Dicer subfamily. In terms of assembly, component of the miRNA-directed RISC loading complex (miRLC), composed of at least Dcr-1, AGO1 and loqs, which processes pre-miRNAs and loads the resulting miRNAs into the Argonaute 1 (AGO1)-containing RNA-induced silencing complex (miRISC). Interacts (via helicase domain) with dicing cofactor loqs isoform-PB (loqs-PB) (via DRBM 3 domain); this interaction enhances processing of pre-miRNAs by increasing substrate binding affinity of the dicer. Also able to interact with loqs isoforms PA and PC, however the relevance of such interactions are unclear in vivo. Different regions of the Dcr-1-loqs-PB heterodimer collaborate to recognize, bind and position the pre-miRNA for Dcr-1 mediated cleavage. In the absence of authentic miRNA substrates, the heterodimer favors a closed, catalytically incompetent, conformation, whereas binding of authentic pre-miRNA substrates stabilizes the relatively rare open, catalytically competent, conformation of the heterodimer. During substrate recognition, the Dcr-1 PAZ domain and pre-miRNA interact with the DRBM 1 domain of loqs-PB, which likely contributes to substrate recognition and stabilization. At the miRNA binding stage, the Dcr-1 DRBM domain and loqs-PB DRBM domains then bind the pre-miRNA in tandem to form a tight 'belt' around the pre-miRNA stem, the pre-miRNA loop is docked in the loop-binding region formed by DUF283, DRBM and part of the N terminus of Dcr-1, and the loqs-PB DRBM 1 and the wing domain of Dcr-1 act together to bind the 5' and 3' pre-miRNA termini within the PAZ and platform domains of Dcr-1. These interactions between the proteins and their pre-miRNA substrate stabilize a distorted form of the pre-miRNA and position the scissile phosphodiester bonds of the pre-miRNA at the RNase III catalytic cleavage sites of Dcr-1. Following Dcr-1 mediated cleavage, the miRNA duplex remains bound to loqs-PB DRBM 1, which dissociates from the Dcr-1 RNase III 1 domain but remains in contact with the PAZ and wing domains, suggesting that the heterodimer presents the mature miRNA to Ago2 for loading into the RNA-induced silencing complex (miRISC). Interacts with AGO2 and Fmr1 to form a RNA-induced silencing complex (siRISC), a ribonucleoprotein (RNP) complex involved in translation regulation; other components of the complex are RpL5, RpL11, AGO2 and Rm62. Interacts with piwi and vas; these interactions occur in the polar granules. Mg(2+) serves as cofactor. Requires Mn(2+) as cofactor.

Its subcellular location is the cytoplasm. The protein localises to the cytosol. The enzyme catalyses Endonucleolytic cleavage to 5'-phosphomonoester.. Activity towards pre-miRNAs is not inhibited by inorganic phosphate. Functionally, endoribonuclease which functions in microRNA- (miRNA) gene silencing and, independently of its ribonuclease III activity, also acts in the short interfering RNA- (siRNA) gene silencing pathway. Cleaves hairpin precursor miRNAs (pre-miRNA) to generate mature miRNAs (miRNAs) that are between twenty-one to twenty-four nucleotides in length and function in RNA silencing and post-transcriptional regulation of gene expression. Also functions in miRNA loading and assembly of the Argonaute 1 (AGO1)-containing RNA-induced silencing complex (miRISC), with the miRNAs serving as a guide to direct the miRISC to complementary RNAs to degrade them or prevent their translation. Independently of its catalytic activity, functions in the siRNA silencing pathway by promoting assembly of the siRNA-directed Argonaute 2 (AGO2)-containing RISC (siRISC). Required for the proper formation of a stable intermediate (R2) in siRISC assembly, which is formed from the R1 precursor complex (containing Dcr-2, R2D2 and the siRNA) and is used for assembly of the mature (R3) siRISC complex. It is not required for siRNA biogenesis. During embryogenesis, involved in germline fate determination. Post-transcriptionally regulates mei-P26 expression through the microRNA pathway, which in turn post-translationally regulates myc protein levels; involved in regulating cell and tissue growth. This Drosophila melanogaster (Fruit fly) protein is Endoribonuclease Dcr-1.